We begin with the raw amino-acid sequence, 515 residues long: Probable cytosol aminopeptidase (515 aa).

Mn(2+) is bound by residues Lys279 and Asp284. Lys291 is an active-site residue. Residues Asp302, Asp361, and Glu363 each coordinate Mn(2+). The active site involves Arg365.

It belongs to the peptidase M17 family. It depends on Mn(2+) as a cofactor.

Its subcellular location is the cytoplasm. It catalyses the reaction Release of an N-terminal amino acid, Xaa-|-Yaa-, in which Xaa is preferably Leu, but may be other amino acids including Pro although not Arg or Lys, and Yaa may be Pro. Amino acid amides and methyl esters are also readily hydrolyzed, but rates on arylamides are exceedingly low.. The catalysed reaction is Release of an N-terminal amino acid, preferentially leucine, but not glutamic or aspartic acids.. Functionally, presumably involved in the processing and regular turnover of intracellular proteins. Catalyzes the removal of unsubstituted N-terminal amino acids from various peptides. The chain is Probable cytosol aminopeptidase from Mycobacterium bovis (strain ATCC BAA-935 / AF2122/97).